Consider the following 150-residue polypeptide: MIIEEIVGNVANLSEEEKQKHIEKVYLENSDLVKRIQRVTTDHGNEIGIRLKNPVDLEYGDILYQDDHNMIVVDVNSEDILVIQPRTLKEMGDIAHQLGNRHLPTQFTENEMLVQYDYLVEDLLKSLGIPYTREDRKVNKAFRHIGHSHD.

It belongs to the UreE family.

Its subcellular location is the cytoplasm. Involved in urease metallocenter assembly. Binds nickel. Probably functions as a nickel donor during metallocenter assembly. This is Urease accessory protein UreE from Staphylococcus carnosus (strain TM300).